Here is a 264-residue protein sequence, read N- to C-terminus: Phosphoribosylaminoimidazole-succinocarboxamide synthase 1 (264 aa).

This sequence belongs to the SAICAR synthetase family.

It catalyses the reaction 5-amino-1-(5-phospho-D-ribosyl)imidazole-4-carboxylate + L-aspartate + ATP = (2S)-2-[5-amino-1-(5-phospho-beta-D-ribosyl)imidazole-4-carboxamido]succinate + ADP + phosphate + 2 H(+). The protein operates within purine metabolism; IMP biosynthesis via de novo pathway; 5-amino-1-(5-phospho-D-ribosyl)imidazole-4-carboxamide from 5-amino-1-(5-phospho-D-ribosyl)imidazole-4-carboxylate: step 1/2. The polypeptide is Phosphoribosylaminoimidazole-succinocarboxamide synthase 1 (purC1) (Mesorhizobium japonicum (strain LMG 29417 / CECT 9101 / MAFF 303099) (Mesorhizobium loti (strain MAFF 303099))).